The following is a 248-amino-acid chain: ATP synthase subunit a (248 aa).

The next 6 membrane-spanning stretches (helical) occupy residues T34–G54, Y91–I111, I121–V141, F147–I167, F197–I217, and L220–L240.

It belongs to the ATPase A chain family. In terms of assembly, F-type ATPases have 2 components, CF(1) - the catalytic core - and CF(0) - the membrane proton channel. CF(1) has five subunits: alpha(3), beta(3), gamma(1), delta(1), epsilon(1). CF(0) has four main subunits: a, b, b' and c.

The protein localises to the cell inner membrane. Its function is as follows. Key component of the proton channel; it plays a direct role in the translocation of protons across the membrane. The chain is ATP synthase subunit a from Dinoroseobacter shibae (strain DSM 16493 / NCIMB 14021 / DFL 12).